The primary structure comprises 346 residues: Putative aminopeptidase YhfE (346 aa).

2 residues coordinate a divalent metal cation: histidine 68 and aspartate 185. Catalysis depends on glutamate 219, which acts as the Proton acceptor. Positions 220, 240, and 320 each coordinate a divalent metal cation.

Belongs to the peptidase M42 family. It depends on a divalent metal cation as a cofactor.

The sequence is that of Putative aminopeptidase YhfE (yhfE) from Bacillus subtilis (strain 168).